Reading from the N-terminus, the 426-residue chain is Zinc finger CCCH domain-containing protein 13 (426 aa).

The segment at 10–36 adopts a C3H1-type zinc-finger fold; sequence AYKTKLCALWQRGNCNRDTCSFAHGHG. Disordered stretches follow at residues 34–155, 253–317, and 390–426; these read GHGD…HEKQ, NEEG…DKTS, and NDAD…VDVE. 3 stretches are compositionally biased toward basic and acidic residues: residues 54 to 70, 78 to 101, and 108 to 120; these read RRDY…DRRF, PGRE…RDSS, and RKSE…KTDD. The segment covering 124-133 has biased composition (low complexity); sequence NSSRSLSLSD. The segment covering 135–155 has biased composition (basic and acidic residues); sequence NDEKKKDKFSSGDEKEDHEKQ. Residues 144 to 245 are a coiled coil; sequence SSGDEKEDHE…FERLGDLLAS (102 aa). The span at 255–272 shows a compositional bias: polar residues; it reads EGSSVNEDLNERSPNTAA. Residues 284-317 show a composition bias toward basic and acidic residues; the sequence is EEAKAVKKRRERDSDTMTRSDKYRSDVTDFDKTS. A compositionally biased stretch (acidic residues) spans 416 to 426; the sequence is YEGDDEEVDVE.

This is Zinc finger CCCH domain-containing protein 13 from Oryza sativa subsp. japonica (Rice).